Consider the following 283-residue polypeptide: Acetylglutamate kinase (283 aa).

Residues 64-65 (GG), Arg86, and Asn178 each bind substrate.

The protein belongs to the acetylglutamate kinase family. ArgB subfamily.

It localises to the cytoplasm. It carries out the reaction N-acetyl-L-glutamate + ATP = N-acetyl-L-glutamyl 5-phosphate + ADP. The protein operates within amino-acid biosynthesis; L-arginine biosynthesis; N(2)-acetyl-L-ornithine from L-glutamate: step 2/4. Functionally, catalyzes the ATP-dependent phosphorylation of N-acetyl-L-glutamate. In Lactococcus lactis subsp. cremoris (strain SK11), this protein is Acetylglutamate kinase.